The following is a 121-amino-acid chain: Small ribosomal subunit protein uS13 (121 aa).

Residues 92–121 (KRGLPVRGQRTRTNARTRKGPRRAAASLKK) are disordered.

This sequence belongs to the universal ribosomal protein uS13 family. As to quaternary structure, part of the 30S ribosomal subunit. Forms a loose heterodimer with protein S19. Forms two bridges to the 50S subunit in the 70S ribosome.

In terms of biological role, located at the top of the head of the 30S subunit, it contacts several helices of the 16S rRNA. In the 70S ribosome it contacts the 23S rRNA (bridge B1a) and protein L5 of the 50S subunit (bridge B1b), connecting the 2 subunits; these bridges are implicated in subunit movement. Contacts the tRNAs in the A and P-sites. This Bordetella bronchiseptica (strain ATCC BAA-588 / NCTC 13252 / RB50) (Alcaligenes bronchisepticus) protein is Small ribosomal subunit protein uS13.